Consider the following 90-residue polypeptide: MKTAIFTVVLALAVFAVLSFGWEANEKALSEEFTELIHEKEAASETEARECRYFWGECHDRMPCCDWLVCRYKWPITYNICVWNRTFPEK.

The first 19 residues, 1–19 (MKTAIFTVVLALAVFAVLS), serve as a signal peptide directing secretion. Positions 20–50 (FGWEANEKALSEEFTELIHEKEAASETEARE) are excised as a propeptide. 3 cysteine pairs are disulfide-bonded: cysteine 51/cysteine 65, cysteine 58/cysteine 70, and cysteine 64/cysteine 81.

The protein belongs to the neurotoxin 10 (Hwtx-1) family. 13 (Hntx-13) subfamily. In terms of tissue distribution, expressed by the venom gland.

The protein localises to the secreted. Its function is as follows. Ion channel inhibitor. The polypeptide is U7-theraphotoxin-Hhn1e (Cyriopagopus hainanus (Chinese bird spider)).